Consider the following 311-residue polypeptide: MNRLIRSLCLACAGLFAAGLAQAETLRIGGKTFTEQRILTAITAQFLQKRGYDVTVTTGLGSTLARAAQESGQLDIVWEYTGSSLIVYNHIDEKLDAAASYRRVKQLDEAQGLVWLKPTRFNNTYALAMPEEQAEHLGIQSVSDLARVLAEQQEAEPGSTHLFAMDPEFAGRPDGLGPMSELYGLHFTRNDIRQMDAGLVYTALKNRQVFLGLVYTTDGRLKDFKLRVLKDDKQYFPFYNAAPVVRKEVMQRHPEFATLFDPIIERLDDATMQALNARVDIEQQTPQKVAADFLREHHLLDDGQAGQGGSQ.

Positions 1–23 (MNRLIRSLCLACAGLFAAGLAQA) are cleaved as a signal peptide.

The protein belongs to the OsmX family.

The protein resides in the periplasm. In terms of biological role, binds glycine-betaine. The sequence is that of Glycine-betaine-binding protein from Pseudomonas aeruginosa (strain ATCC 15692 / DSM 22644 / CIP 104116 / JCM 14847 / LMG 12228 / 1C / PRS 101 / PAO1).